A 244-amino-acid polypeptide reads, in one-letter code: Histone H1, orphon (244 aa).

Residues 1-21 (MSDPAPEIEAPVEAAPVASPP) show a composition bias toward low complexity. 2 disordered regions span residues 1-59 (MSDP…PVSE) and 113-244 (QAKG…KKAK). The segment covering 35 to 45 (PKAEKPKSDKP) has biased composition (basic and acidic residues). Residues 53–127 (THPPVSEMVV…GASGSFKLPP (75 aa)) form the H15 domain. Residues 186–203 (AKPASKKAAAPKPKAAKP) are compositionally biased toward low complexity. Basic residues predominate over residues 213 to 244 (ATKAAAKKPVAKPVAKKPAAKPAKKPAAKKAK).

It belongs to the histone H1/H5 family.

Its subcellular location is the nucleus. It localises to the chromosome. Functionally, histones H1 are necessary for the condensation of nucleosome chains into higher-order structures. This Chironomus thummi thummi (Midge) protein is Histone H1, orphon.